We begin with the raw amino-acid sequence, 299 residues long: GTPase Era (299 aa).

Positions 5-172 constitute an Era-type G domain; sequence KSGFVSIIGR…IDVLKTYLPE (168 aa). The G1 stretch occupies residues 13–20; the sequence is GRPNVGKS. 13–20 serves as a coordination point for GTP; it reads GRPNVGKS. The tract at residues 39-43 is G2; the sequence is QTTRN. Residues 60-63 are G3; it reads DTPG. GTP contacts are provided by residues 60 to 64 and 122 to 125; these read DTPGI and NKID. A G4 region spans residues 122 to 125; sequence NKID. Residues 151-153 are G5; sequence ISA. Residues 203 to 280 enclose the KH type-2 domain; it reads TSEEIPHAIG…YLELWVKVQR (78 aa).

The protein belongs to the TRAFAC class TrmE-Era-EngA-EngB-Septin-like GTPase superfamily. Era GTPase family. As to quaternary structure, monomer.

It localises to the cytoplasm. Its subcellular location is the cell membrane. Its function is as follows. An essential GTPase that binds both GDP and GTP, with rapid nucleotide exchange. Plays a role in 16S rRNA processing and 30S ribosomal subunit biogenesis and possibly also in cell cycle regulation and energy metabolism. The chain is GTPase Era from Staphylococcus aureus (strain bovine RF122 / ET3-1).